Here is a 112-residue protein sequence, read N- to C-terminus: Putative pterin-4-alpha-carbinolamine dehydratase (112 aa).

It belongs to the pterin-4-alpha-carbinolamine dehydratase family.

It carries out the reaction (4aS,6R)-4a-hydroxy-L-erythro-5,6,7,8-tetrahydrobiopterin = (6R)-L-erythro-6,7-dihydrobiopterin + H2O. The protein is Putative pterin-4-alpha-carbinolamine dehydratase of Shewanella sp. (strain ANA-3).